We begin with the raw amino-acid sequence, 460 residues long: Protein btn1 (460 aa).

11 helical membrane passes run 42–62, 76–96, 105–125, 135–155, 164–184, 195–215, 287–307, 323–343, 356–376, 378–398, and 428–448; these read VCVAFWLFGLINNVLYVVILS, VVLLADVIPSFATKLIAPYFI, IIIFVFLSAAGMLLVALSPPY, LAGIVLASLSSGGGELSFVGL, LAAWGSGTGAAGLVGAGAYAL, ATLLASSCLPAVMVVSFFMVL, GLFFPFMLPLLLVYVAEYTIN, FAHFRAFYPAYNAIYQVGVFI, LYLPSFLQILNLVLLTLQAVF, FIPSVYIIFIIIFWEGLLGGL, and AAGICIAGFVSMVFEVWLCDW.

The protein belongs to the battenin family.

It localises to the vacuole membrane. Its function is as follows. Involved in vacuolar transport and vacuole pH homeostasis. Also required for cytokinesis. This Aspergillus fumigatus (strain ATCC MYA-4609 / CBS 101355 / FGSC A1100 / Af293) (Neosartorya fumigata) protein is Protein btn1 (btn1).